The following is a 366-amino-acid chain: tRNA/tmRNA (uracil-C(5))-methyltransferase (366 aa).

S-adenosyl-L-methionine-binding residues include glutamine 190, tyrosine 218, asparagine 223, glutamate 239, and aspartate 299. Catalysis depends on cysteine 324, which acts as the Nucleophile. Catalysis depends on glutamate 358, which acts as the Proton acceptor.

This sequence belongs to the class I-like SAM-binding methyltransferase superfamily. RNA M5U methyltransferase family. TrmA subfamily.

It catalyses the reaction uridine(54) in tRNA + S-adenosyl-L-methionine = 5-methyluridine(54) in tRNA + S-adenosyl-L-homocysteine + H(+). The enzyme catalyses uridine(341) in tmRNA + S-adenosyl-L-methionine = 5-methyluridine(341) in tmRNA + S-adenosyl-L-homocysteine + H(+). Its function is as follows. Dual-specificity methyltransferase that catalyzes the formation of 5-methyluridine at position 54 (m5U54) in all tRNAs, and that of position 341 (m5U341) in tmRNA (transfer-mRNA). The chain is tRNA/tmRNA (uracil-C(5))-methyltransferase from Salmonella choleraesuis (strain SC-B67).